Consider the following 386-residue polypeptide: WD repeat-containing protein 89 (386 aa).

6 WD repeats span residues 21–65 (KEPT…LLRE), 68–107 (GSPGLLNGVRFANSCDNVYSASTDGTVKCWDARLASEKPA), 112–156 (GYPS…QDLS), 167–207 (THSD…EEDA), 213–253 (NSVS…TDEP), and 318–357 (GHAATVRSFCWTVSEDSLLTGGEDAQLLLWKPGAVEKTFT).

This is WD repeat-containing protein 89 (Wdr89) from Rattus norvegicus (Rat).